Consider the following 38-residue polypeptide: Photosystem II reaction center protein L (38 aa).

A helical membrane pass occupies residues serine 17–phenylalanine 37.

Belongs to the PsbL family. In terms of assembly, PSII is composed of 1 copy each of membrane proteins PsbA, PsbB, PsbC, PsbD, PsbE, PsbF, PsbH, PsbI, PsbJ, PsbK, PsbL, PsbM, PsbT, PsbX, PsbY, PsbZ, Psb30/Ycf12, at least 3 peripheral proteins of the oxygen-evolving complex and a large number of cofactors. It forms dimeric complexes.

It is found in the plastid. Its subcellular location is the chloroplast thylakoid membrane. Functionally, one of the components of the core complex of photosystem II (PSII). PSII is a light-driven water:plastoquinone oxidoreductase that uses light energy to abstract electrons from H(2)O, generating O(2) and a proton gradient subsequently used for ATP formation. It consists of a core antenna complex that captures photons, and an electron transfer chain that converts photonic excitation into a charge separation. This subunit is found at the monomer-monomer interface and is required for correct PSII assembly and/or dimerization. The protein is Photosystem II reaction center protein L of Antirrhinum majus (Garden snapdragon).